Here is a 267-residue protein sequence, read N- to C-terminus: 4-hydroxy-tetrahydrodipicolinate reductase (267 aa).

Residues 8–13 (GAAGRM) and aspartate 34 each bind NAD(+). Arginine 35 is a binding site for NADP(+). NAD(+)-binding positions include 98–100 (GTT) and 122–125 (AANF). The active-site Proton donor/acceptor is histidine 155. A (S)-2,3,4,5-tetrahydrodipicolinate-binding site is contributed by histidine 156. Lysine 159 (proton donor) is an active-site residue. Residue 165–166 (GT) participates in (S)-2,3,4,5-tetrahydrodipicolinate binding.

This sequence belongs to the DapB family.

It is found in the cytoplasm. It carries out the reaction (S)-2,3,4,5-tetrahydrodipicolinate + NAD(+) + H2O = (2S,4S)-4-hydroxy-2,3,4,5-tetrahydrodipicolinate + NADH + H(+). The catalysed reaction is (S)-2,3,4,5-tetrahydrodipicolinate + NADP(+) + H2O = (2S,4S)-4-hydroxy-2,3,4,5-tetrahydrodipicolinate + NADPH + H(+). It functions in the pathway amino-acid biosynthesis; L-lysine biosynthesis via DAP pathway; (S)-tetrahydrodipicolinate from L-aspartate: step 4/4. Functionally, catalyzes the conversion of 4-hydroxy-tetrahydrodipicolinate (HTPA) to tetrahydrodipicolinate. This Pseudomonas amygdali pv. tabaci (Pseudomonas syringae pv. tabaci) protein is 4-hydroxy-tetrahydrodipicolinate reductase.